The chain runs to 130 residues: Small ribosomal subunit protein uS8A (130 aa).

This sequence belongs to the universal ribosomal protein uS8 family. In terms of assembly, component of the small ribosomal subunit (SSU). Mature yeast ribosomes consist of a small (40S) and a large (60S) subunit. The 40S small subunit contains 1 molecule of ribosomal RNA (18S rRNA) and at least 33 different proteins. The large 60S subunit contains 3 rRNA molecules (25S, 5.8S and 5S rRNA) and at least 46 different proteins.

It localises to the cytoplasm. Its subcellular location is the nucleus. In terms of biological role, component of the ribosome, a large ribonucleoprotein complex responsible for the synthesis of proteins in the cell. The small ribosomal subunit (SSU) binds messenger RNAs (mRNAs) and translates the encoded message by selecting cognate aminoacyl-transfer RNA (tRNA) molecules. The large subunit (LSU) contains the ribosomal catalytic site termed the peptidyl transferase center (PTC), which catalyzes the formation of peptide bonds, thereby polymerizing the amino acids delivered by tRNAs into a polypeptide chain. The nascent polypeptides leave the ribosome through a tunnel in the LSU and interact with protein factors that function in enzymatic processing, targeting, and the membrane insertion of nascent chains at the exit of the ribosomal tunnel. This is Small ribosomal subunit protein uS8A (rps2201) from Schizosaccharomyces pombe (strain 972 / ATCC 24843) (Fission yeast).